A 275-amino-acid chain; its full sequence is Diaminopimelate epimerase (275 aa).

3 residues coordinate substrate: Asn-12, Gln-45, and Asn-65. The Proton donor role is filled by Cys-74. Substrate contacts are provided by residues 75–76 (GN), Asn-158, Asn-191, and 209–210 (ER). Cys-218 acts as the Proton acceptor in catalysis. 219-220 (GS) contacts substrate.

This sequence belongs to the diaminopimelate epimerase family. In terms of assembly, homodimer.

The protein localises to the cytoplasm. It catalyses the reaction (2S,6S)-2,6-diaminopimelate = meso-2,6-diaminopimelate. It functions in the pathway amino-acid biosynthesis; L-lysine biosynthesis via DAP pathway; DL-2,6-diaminopimelate from LL-2,6-diaminopimelate: step 1/1. Catalyzes the stereoinversion of LL-2,6-diaminopimelate (L,L-DAP) to meso-diaminopimelate (meso-DAP), a precursor of L-lysine and an essential component of the bacterial peptidoglycan. In Shewanella amazonensis (strain ATCC BAA-1098 / SB2B), this protein is Diaminopimelate epimerase.